The sequence spans 659 residues: DNA ligase (659 aa).

Residues 32 to 36 (DQQYD), 81 to 82 (SL), and Glu-110 contribute to the NAD(+) site. The active-site N6-AMP-lysine intermediate is the Lys-112. The NAD(+) site is built by Arg-133, Glu-167, Lys-282, and Lys-306. Zn(2+) is bound by residues Cys-399, Cys-402, Cys-415, and Cys-420. The BRCT domain occupies 582–659 (IKNNIFKNKK…QEHEFEELIK (78 aa)).

It belongs to the NAD-dependent DNA ligase family. LigA subfamily. Mg(2+) is required as a cofactor. It depends on Mn(2+) as a cofactor.

It catalyses the reaction NAD(+) + (deoxyribonucleotide)n-3'-hydroxyl + 5'-phospho-(deoxyribonucleotide)m = (deoxyribonucleotide)n+m + AMP + beta-nicotinamide D-nucleotide.. In terms of biological role, DNA ligase that catalyzes the formation of phosphodiester linkages between 5'-phosphoryl and 3'-hydroxyl groups in double-stranded DNA using NAD as a coenzyme and as the energy source for the reaction. It is essential for DNA replication and repair of damaged DNA. In Phytoplasma mali (strain AT), this protein is DNA ligase.